We begin with the raw amino-acid sequence, 246 residues long: 2',3'-cyclic-nucleotide 3'-phosphodiesterase (246 aa).

Histidine 40 functions as the Proton donor/acceptor in the catalytic mechanism. A substrate-binding site is contributed by threonine 42. Residues 133–146 (QNPQLYTKDNNGNT) show a composition bias toward polar residues. Residues 133–159 (QNPQLYTKDNNGNTIRRKPSKKKSKTT) form a disordered region. A compositionally biased stretch (basic residues) spans 147 to 156 (IRRKPSKKKS). Histidine 188 serves as the catalytic Proton donor/acceptor. Substrate-binding residues include serine 190 and tyrosine 193.

This sequence belongs to the 2H phosphoesterase superfamily. CPD1 family.

The protein resides in the golgi apparatus. It catalyses the reaction a nucleoside 2',3'-cyclic phosphate + H2O = a nucleoside 2'-phosphate + H(+). In terms of biological role, involved in the metabolism of ADP-ribose 1',2'-cyclic phosphate which is produced as a consequence of tRNA splicing. The polypeptide is 2',3'-cyclic-nucleotide 3'-phosphodiesterase (CPD1) (Candida albicans (strain SC5314 / ATCC MYA-2876) (Yeast)).